Reading from the N-terminus, the 206-residue chain is MKILVASRNPKKLAELSRVLESSGVSGVELVSLTDVPEYEEVPETGASFEDNALIKAREGVKHTGLACVADDSGLAVDALNWMPGVLSARWSGRHGDDAANTALLLAQLSDIPDERRGAAFVSACALVTPEGEEVVVEGRWKGSIARIPAGQNGFGYDPIFVPRGGLRTAAELTPEEKDAVSHRGRALAALLPMLRNLVNLGRTAP.

7 to 12 (SRNPKK) contacts substrate. Asp-72 serves as the catalytic Proton acceptor. Residue Asp-72 participates in Mg(2+) binding. Substrate contacts are provided by residues Ser-73, 155–158 (FGYD), Lys-178, and 183–184 (HR).

It belongs to the HAM1 NTPase family. In terms of assembly, homodimer. Requires Mg(2+) as cofactor.

The enzyme catalyses XTP + H2O = XMP + diphosphate + H(+). It catalyses the reaction dITP + H2O = dIMP + diphosphate + H(+). It carries out the reaction ITP + H2O = IMP + diphosphate + H(+). Functionally, pyrophosphatase that catalyzes the hydrolysis of nucleoside triphosphates to their monophosphate derivatives, with a high preference for the non-canonical purine nucleotides XTP (xanthosine triphosphate), dITP (deoxyinosine triphosphate) and ITP. Seems to function as a house-cleaning enzyme that removes non-canonical purine nucleotides from the nucleotide pool, thus preventing their incorporation into DNA/RNA and avoiding chromosomal lesions. The polypeptide is dITP/XTP pyrophosphatase (Mycobacteroides abscessus (strain ATCC 19977 / DSM 44196 / CCUG 20993 / CIP 104536 / JCM 13569 / NCTC 13031 / TMC 1543 / L948) (Mycobacterium abscessus)).